A 61-amino-acid polypeptide reads, in one-letter code: Potassium channel toxin alpha-KTx 5.3 (61 aa).

Residues 1-28 (MHNYYKIVLIMVAFFAVIITFSNIQVEG) form the signal peptide. 3 disulfide bridges follow: C31–C49, C36–C54, and C40–C56. Residues 34–37 (KRCQ) are [R/K]XCQ motif. At H59 the chain carries Histidine amide.

This sequence belongs to the short scorpion toxin superfamily. Potassium channel inhibitor family. Alpha-KTx 05 subfamily. Expressed by the venom gland.

It localises to the secreted. Functionally, blocks small conductance calcium-activated potassium channels (KCNN, SK). Has also been shown to weakly inhibit Kv11.1/KCNH2/ERG1, Kv1.2/KCNA2, Kv1.3/KCNA3 and Kv2.1/KCNB1 voltage-gated potassium channels. This is Potassium channel toxin alpha-KTx 5.3 from Olivierus martensii (Manchurian scorpion).